The primary structure comprises 363 residues: Spermidine/putrescine import ATP-binding protein PotA (363 aa).

Residues 6–236 (VEFKNVIKKY…PINHFVADFI (231 aa)) enclose the ABC transporter domain. An ATP-binding site is contributed by 38-45 (GPSGCGKT).

Belongs to the ABC transporter superfamily. Spermidine/putrescine importer (TC 3.A.1.11.1) family. In terms of assembly, the complex is composed of two ATP-binding proteins (PotA), two transmembrane proteins (PotB and PotC) and a solute-binding protein (PotD).

Its subcellular location is the cell membrane. The enzyme catalyses ATP + H2O + polyamine-[polyamine-binding protein]Side 1 = ADP + phosphate + polyamineSide 2 + [polyamine-binding protein]Side 1.. In terms of biological role, part of the ABC transporter complex PotABCD involved in spermidine/putrescine import. Responsible for energy coupling to the transport system. The protein is Spermidine/putrescine import ATP-binding protein PotA of Latilactobacillus sakei subsp. sakei (strain 23K) (Lactobacillus sakei subsp. sakei).